A 487-amino-acid chain; its full sequence is Catalase (487 aa).

Residues 1–20 are disordered; the sequence is MSQRVLTTESGAPVADNQNS. Active-site residues include His54 and Asn127. A heme-binding site is contributed by Tyr337.

This sequence belongs to the catalase family. The cofactor is heme.

It catalyses the reaction 2 H2O2 = O2 + 2 H2O. Decomposes hydrogen peroxide into water and oxygen; serves to protect cells from the toxic effects of hydrogen peroxide. The sequence is that of Catalase (katA) from Streptomyces coelicolor (strain ATCC BAA-471 / A3(2) / M145).